Consider the following 168-residue polypeptide: Lipoprotein signal peptidase (168 aa).

Transmembrane regions (helical) follow at residues 8 to 28, 70 to 90, and 104 to 124; these read TLLV…VVLL, KYFL…YLFF, and VLLC…GHIV. Active-site residues include Asp-125 and Asp-143. Residues 134–154 traverse the membrane as a helical segment; it reads WAFPTFNVADVLISLGTLLLV.

The protein belongs to the peptidase A8 family.

It localises to the cell inner membrane. The catalysed reaction is Release of signal peptides from bacterial membrane prolipoproteins. Hydrolyzes -Xaa-Yaa-Zaa-|-(S,diacylglyceryl)Cys-, in which Xaa is hydrophobic (preferably Leu), and Yaa (Ala or Ser) and Zaa (Gly or Ala) have small, neutral side chains.. Its pathway is protein modification; lipoprotein biosynthesis (signal peptide cleavage). In terms of biological role, this protein specifically catalyzes the removal of signal peptides from prolipoproteins. This Chlamydia pneumoniae (Chlamydophila pneumoniae) protein is Lipoprotein signal peptidase.